The following is a 1392-amino-acid chain: DNA-directed RNA polymerase subunit beta (1392 aa).

The protein belongs to the RNA polymerase beta chain family. In terms of assembly, the RNAP catalytic core consists of 2 alpha, 1 beta, 1 beta' and 1 omega subunit. When a sigma factor is associated with the core the holoenzyme is formed, which can initiate transcription.

It carries out the reaction RNA(n) + a ribonucleoside 5'-triphosphate = RNA(n+1) + diphosphate. Functionally, DNA-dependent RNA polymerase catalyzes the transcription of DNA into RNA using the four ribonucleoside triphosphates as substrates. The polypeptide is DNA-directed RNA polymerase subunit beta (Neisseria gonorrhoeae (strain ATCC 700825 / FA 1090)).